A 102-amino-acid polypeptide reads, in one-letter code: Small ribosomal subunit protein uS10 (102 aa).

The protein belongs to the universal ribosomal protein uS10 family. As to quaternary structure, part of the 30S ribosomal subunit.

In terms of biological role, involved in the binding of tRNA to the ribosomes. The chain is Small ribosomal subunit protein uS10 from Exiguobacterium sibiricum (strain DSM 17290 / CCUG 55495 / CIP 109462 / JCM 13490 / 255-15).